We begin with the raw amino-acid sequence, 188 residues long: MNGDDTFAKRPRDDAKASEKRSKAFDDIATYFSKKEWKKMKYSEKISYVYMKRNYKAMTKLGFKVTLPPFMCNKQATDFQGNDFDNDHNRRIQVEHPQMTFGRLHRIIPKIMPKKPAEDENDSKGVSEASGPQNDGKQLHPPGKANISEKINKRSGPKRGKHAWTHRLRERKQLVIYEEISDPEEDDE.

2 disordered regions span residues 1 to 22 (MNGD…EKRS) and 111 to 188 (IMPK…EDDE). A KRAB-related domain is found at 20–83 (KRSKAFDDIA…KQATDFQGND (64 aa)). Residues 115 to 125 (KPAEDENDSKG) are compositionally biased toward basic and acidic residues. S123 is modified (phosphoserine). Over residues 153-170 (KRSGPKRGKHAWTHRLRE) the composition is skewed to basic residues. A compositionally biased stretch (acidic residues) spans 179–188 (EISDPEEDDE).

This sequence belongs to the SSX family. As to expression, expressed at high level in the testis. Expressed at low level in thyroid. Not detected in tonsil, colon, lung, spleen, prostate, kidney, striated and smooth muscles. Detected in rhabdomyosarcoma and fibrosarcoma cell lines. Not detected in mesenchymal and epithelial cell lines. Expressed in testis.

It is found in the cytoplasm. The protein localises to the cytoskeleton. Its subcellular location is the flagellum axoneme. Its function is as follows. Could act as a modulator of transcription. Plays a role in spermatogenesis. The sequence is that of Protein SSX1 (SSX1) from Homo sapiens (Human).